A 325-amino-acid polypeptide reads, in one-letter code: MVKIAVDMMGGDDAPGIVLDAVKKAVEDFKDLEIILFGDESQYNLSHERIEFRHCTEKIEMEDEPVRAIKRKKDSSMVKMAEAVKSGEADGCVSAGNTGALMSAGLFIVGRIKGVARPALVVTLPTTDGKGFVFLDVGANADAKAEHLLQYAQLGNIYAQKIRGIQNPSVSLLNIGTEAAKGNSLTKKAYDLFEKNQSFNFTGNIEAKTLMDGNVDVVVTDGYTGNMVLKNLEGTAKSIGKMLKETIMSSFKNKLAGAVLKKDLETFAKKMDYSEYGGSVLLGLDGTVVKAHGSSNAKAFYSAIKQAKIAGEENIVQIMKDTVGE.

The protein belongs to the PlsX family. In terms of assembly, homodimer. Probably interacts with PlsY.

It localises to the cytoplasm. The catalysed reaction is a fatty acyl-[ACP] + phosphate = an acyl phosphate + holo-[ACP]. It participates in lipid metabolism; phospholipid metabolism. In terms of biological role, catalyzes the reversible formation of acyl-phosphate (acyl-PO(4)) from acyl-[acyl-carrier-protein] (acyl-ACP). This enzyme utilizes acyl-ACP as fatty acyl donor, but not acyl-CoA. The protein is Phosphate acyltransferase of Staphylococcus epidermidis (strain ATCC 12228 / FDA PCI 1200).